A 114-amino-acid polypeptide reads, in one-letter code: Propane 2-monooxygenase, effector component (114 aa).

This sequence belongs to the TmoD/XamoD family. As to quaternary structure, the propane 2-monooxygenase multicomponent enzyme system is composed of an electron transfer component and a monooxygenase component interacting with the effector protein MimD. The electron transfer component is composed of a reductase (MimB), and the monooxygenase component is formed by a large subunit (MimA) and a small subunit (MimC).

Its function is as follows. Effector component of the propane 2-monooxygenase multicomponent enzyme system which is involved in the degradation of propane via the O2-dependent hydroxylation of propane. The polypeptide is Propane 2-monooxygenase, effector component (Mycolicibacterium smegmatis (strain ATCC 700084 / mc(2)155) (Mycobacterium smegmatis)).